The following is a 343-amino-acid chain: Selenide, water dikinase (343 aa).

U16 is an active-site residue. U16 is a non-standard amino acid (selenocysteine). ATP contacts are provided by residues K19 and 46–48 (GAE). D49 contacts Mg(2+). ATP is bound by residues D66, D89, and 137 to 139 (GHT). Position 89 (D89) interacts with Mg(2+). D225 contributes to the Mg(2+) binding site.

Belongs to the selenophosphate synthase 1 family. Class I subfamily. Homodimer. It depends on Mg(2+) as a cofactor.

The enzyme catalyses hydrogenselenide + ATP + H2O = selenophosphate + AMP + phosphate + 2 H(+). In terms of biological role, synthesizes selenophosphate from selenide and ATP. The chain is Selenide, water dikinase from Citrifermentans bemidjiense (strain ATCC BAA-1014 / DSM 16622 / JCM 12645 / Bem) (Geobacter bemidjiensis).